Consider the following 590-residue polypeptide: Arginine--tRNA ligase (590 aa).

A 'HIGH' region motif is present at residues alanine 138–histidine 148.

This sequence belongs to the class-I aminoacyl-tRNA synthetase family. As to quaternary structure, monomer.

It is found in the cytoplasm. The catalysed reaction is tRNA(Arg) + L-arginine + ATP = L-arginyl-tRNA(Arg) + AMP + diphosphate. The protein is Arginine--tRNA ligase of Orientia tsutsugamushi (strain Boryong) (Rickettsia tsutsugamushi).